The chain runs to 102 residues: Small ribosomal subunit protein uS10 (102 aa).

It belongs to the universal ribosomal protein uS10 family. Part of the 30S ribosomal subunit.

Involved in the binding of tRNA to the ribosomes. The chain is Small ribosomal subunit protein uS10 from Mesorhizobium japonicum (strain LMG 29417 / CECT 9101 / MAFF 303099) (Mesorhizobium loti (strain MAFF 303099)).